A 113-amino-acid chain; its full sequence is UPF0482 protein KPK_2871 (113 aa).

Residues 1 to 28 (MNMTLNKRWCLTAILALSAVVYTSSSFA) form the signal peptide. The interval 38–61 (GDSAQSRQQASMEKEQWNDTRSLR) is disordered. A compositionally biased stretch (polar residues) spans 39–48 (DSAQSRQQAS). Residues 49-59 (MEKEQWNDTRS) show a composition bias toward basic and acidic residues.

It belongs to the UPF0482 family.

The chain is UPF0482 protein KPK_2871 from Klebsiella pneumoniae (strain 342).